The chain runs to 282 residues: 4-diphosphocytidyl-2-C-methyl-D-erythritol kinase (282 aa).

Residue Lys-12 is part of the active site. ATP is bound at residue 95-105; sequence PMGGGIGGGSS. Asp-137 is a catalytic residue.

The protein belongs to the GHMP kinase family. IspE subfamily.

It catalyses the reaction 4-CDP-2-C-methyl-D-erythritol + ATP = 4-CDP-2-C-methyl-D-erythritol 2-phosphate + ADP + H(+). It functions in the pathway isoprenoid biosynthesis; isopentenyl diphosphate biosynthesis via DXP pathway; isopentenyl diphosphate from 1-deoxy-D-xylulose 5-phosphate: step 3/6. Its function is as follows. Catalyzes the phosphorylation of the position 2 hydroxy group of 4-diphosphocytidyl-2C-methyl-D-erythritol. This Pseudomonas aeruginosa (strain UCBPP-PA14) protein is 4-diphosphocytidyl-2-C-methyl-D-erythritol kinase.